The chain runs to 241 residues: Cobalt transport protein CbiM (241 aa).

The signal sequence occupies residues 1-24 (MKKIKIISFSVAYLILLTPIYASA). The next 6 membrane-spanning stretches (helical) occupy residues 30-50 (GFLP…FIVG), 67-87 (LLLG…LPSV), 99-119 (LGTI…VLIF), 131-151 (TLGA…YFIF), 160-180 (SLAV…VTSL), and 202-222 (GIFA…TLIV).

It belongs to the CbiM family. Forms an energy-coupling factor (ECF) transporter complex composed of an ATP-binding protein (A component, CbiO), a transmembrane protein (T component, CbiQ) and 2 possible substrate-capture proteins (S components, CbiM and CbiN) of unknown stoichimetry.

It is found in the cell membrane. It participates in cofactor biosynthesis; adenosylcobalamin biosynthesis. Part of the energy-coupling factor (ECF) transporter complex CbiMNOQ involved in cobalt import. This chain is Cobalt transport protein CbiM, found in Acetoanaerobium sticklandii (strain ATCC 12662 / DSM 519 / JCM 1433 / CCUG 9281 / NCIMB 10654 / HF) (Clostridium sticklandii).